The following is a 60-amino-acid chain: Large ribosomal subunit protein uL30 (60 aa).

Belongs to the universal ribosomal protein uL30 family. Part of the 50S ribosomal subunit.

The polypeptide is Large ribosomal subunit protein uL30 (Streptococcus gordonii (strain Challis / ATCC 35105 / BCRC 15272 / CH1 / DL1 / V288)).